Here is a 395-residue protein sequence, read N- to C-terminus: S-adenosylmethionine synthase 2 (395 aa).

Glutamate 9 is a binding site for Mg(2+). Histidine 15 contributes to the ATP binding site. Glutamate 43 provides a ligand contact to K(+). L-methionine contacts are provided by glutamate 56 and glutamine 99. ATP-binding positions include 167 to 169 (DGK), 235 to 238 (SGRF), aspartate 246, 252 to 253 (RK), alanine 269, lysine 273, and lysine 277. Aspartate 246 lines the L-methionine pocket. Lysine 277 contacts L-methionine.

It belongs to the AdoMet synthase family. Homotetramer. The cofactor is Mn(2+). Mg(2+) serves as cofactor. Co(2+) is required as a cofactor. It depends on K(+) as a cofactor.

The protein localises to the cytoplasm. It catalyses the reaction L-methionine + ATP + H2O = S-adenosyl-L-methionine + phosphate + diphosphate. Its pathway is amino-acid biosynthesis; S-adenosyl-L-methionine biosynthesis; S-adenosyl-L-methionine from L-methionine: step 1/1. Its function is as follows. Catalyzes the formation of S-adenosylmethionine from methionine and ATP. The reaction comprises two steps that are both catalyzed by the same enzyme: formation of S-adenosylmethionine (AdoMet) and triphosphate, and subsequent hydrolysis of the triphosphate. The chain is S-adenosylmethionine synthase 2 (METK2) from Suaeda salsa (Seepweed).